A 1526-amino-acid chain; its full sequence is MKFLQKFIITVALLTNIVFAIDITENKVDRGSVTLSFGEIIIHPGASWSIIDNAFSNFIGKLDVKAKSALYISSTSHLLALQVSLTTLLHSINNSGIISFDSRVSLTPSSYDLRGLSFTNSGEMYFAASGRVPSTMSLTSASWTNTGLLSFYQNQRTSGAVCLGFPLGSITNSGKICLNNQVYQQTTQIKGSGCFSANGDSTIYIANVLLSVSANQNFHLVDKDSSMIVQAISTTQTFNVYGFGNGNKIGLTLPLIGIILESAHSYDSSTGILTLRNFLLEQRFNIGLGYDSSKFSVVTDSGSGIPSTIWGSVTYTGRVPTRALPKSCQMACKPIPEAPGVKPTDYTTTITKTNTAGNTVTETGAVTISTDKSGSWFTTTSIFPTLTTATSTSITTTLSNEAHIKTTDNTLAKVSSTVDYISAPISSSEFISLESFVDETLSNENPISTSTDYASENSFAISESTFITASDFQATESLVTESYFSKSQSSDSESFVINTSSAVDNSYVSSSSSAGGSSFPEETHMLQTSDSDLSSTAGSESDVTEFSDVSLATASDSSIADKSIGTESLYSEISLVSASESTGSIGELSISGDTLLKTASETKFVKSSFSSDLISETSSELFVSSSVSTDMILETANDSFITSDKVVETPSYSNELAFETVSETIINSFVSSESSLNTASNSLIASKPSTDSSSYTTDIDFETTTKSFAESPSYFSETVSEIASKSSLSMVEPSCWSELPFETSIESLIAPSYISSEPAPETASESFIVKPSYSEIASESITKSIISTIEASISSDIFSDATTGSIVVQPSVSSGISLEIPSESMLFSESSISKPFISSQSIHECTSDSILVVPSFFSSDVSFETVEYSSTVSTSVDAEPSYSSEISLKTPSESFIVSETFLEPSYSGEVVLATPSESVVASETDVNKPSYSNEAVLQTPSESYILSETGVKESSESSEFALSTPSTSFIASETFTVQSFASSEVSFGSDRESTISTEAIQVEPSISNDVVLETASESFISKAPTTSEFTILSETSIVEPSILSDLRFETTSQSTEMAPSATGVSYFSSTETPLASSSSYESSFATSSVSAIQSINSQVASASFVSADSTDSSEVGSSYTTASAFGPASSASEEKFISVWETSNSGGSFTLESSTSVASVVTTPLPFTSNDIITEISSTWNGAKSDSPHTSESDITSQYNSHSTSVATRSDSISLTDTFEIGFASTWTTGGSGNGGSMKSDVSNQDSYATMLPTSFLDTSNSDITTGVVSTWDAKNSNSYTSAELSTDPYSSDGYASSATAALSITESIPTTDTINTEYHSNGDITTSGGFKEISLTSHYEGGFTSESAGYTIASPSGSTQEFATATITSCFESKCSENVVTYISSVSHSTVTTGYEDTRFTGSIFSGDLASTGDNIVSASGRSVTDATNPFATNTDIGTTSTVSLYGDLNDSDSSVSGYPTNRSDSNGYANTPTTGSNTSGDFSQTIETGSSSFTAIPFENGSTNISNKYLKFLGTVVSILILLI.

The N-terminal stretch at 1-20 (MKFLQKFIITVALLTNIVFA) is a signal peptide. N-linked (GlcNAc...) asparagine glycosylation is found at Asn-93 and Asn-498. Positions 512–541 (SSAGGSSFPEETHMLQTSDSDLSSTAGSES) are disordered. Over residues 525–541 (MLQTSDSDLSSTAGSES) the composition is skewed to polar residues. Asn-637 is a glycosylation site (N-linked (GlcNAc...) asparagine). The segment at 1180–1207 (WNGAKSDSPHTSESDITSQYNSHSTSVA) is disordered. Polar residues predominate over residues 1193-1207 (SDITSQYNSHSTSVA). N-linked (GlcNAc...) asparagine glycans are attached at residues Asn-1451, Asn-1463, Asn-1479, Asn-1502, and Asn-1506. Positions 1455–1483 (SSVSGYPTNRSDSNGYANTPTTGSNTSGD) are disordered. A lipid anchor (GPI-anchor amidated asparagine) is attached at Asn-1502. A propeptide spans 1503 to 1526 (GSTNISNKYLKFLGTVVSILILLI) (removed in mature form).

Belongs to the HYR1/IFF family. Post-translationally, the GPI-anchor is attached to the protein in the endoplasmic reticulum and serves to target the protein to the cell surface. There, the glucosamine-inositol phospholipid moiety is cleaved off and the GPI-$modified mannoprotein is covalently attached via its lipidless GPI glycan remnant to the 1,6-beta-glucan of the outer cell wall layer.

It localises to the secreted. Its subcellular location is the cell wall. The protein resides in the membrane. Functionally, GPI-anchored cell wall protein involved in cell wall organization, hyphal growth, as well as in host-fungal interaction and virulence. Plays a role in adherence to plastic and to host epithelial cells. Promotes the tissue fungal burden during murine vaginal candidiasis. Also increases susceptibility to neutrophil-mediated killing. Furthermore, contributes to the severity of hematogenously disseminated candidiasis in normal mice, but not in neutropenic mice. This Candida albicans (strain SC5314 / ATCC MYA-2876) (Yeast) protein is Cell wall protein IFF4 (IFF4).